The primary structure comprises 333 residues: uncharacterized protein (333 aa).

The protein belongs to the proline racemase family.

This is an uncharacterized protein from Vibrio parahaemolyticus serotype O3:K6 (strain RIMD 2210633).